The primary structure comprises 100 residues: Small ribosomal subunit protein uS14c (100 aa).

This sequence belongs to the universal ribosomal protein uS14 family. As to quaternary structure, part of the 30S ribosomal subunit.

Its subcellular location is the plastid. The protein localises to the chloroplast. In terms of biological role, binds 16S rRNA, required for the assembly of 30S particles. This Staurastrum punctulatum (Green alga) protein is Small ribosomal subunit protein uS14c.